The chain runs to 102 residues: Biotrophy-associated secreted protein 4 (102 aa).

An N-terminal signal peptide occupies residues 1–21 (MQLSFSAIAILLAFAVNHATA). Asn-36 carries an N-linked (GlcNAc...) asparagine glycan.

The protein resides in the secreted. Its function is as follows. Secreted effector involved in biotrophic colonization of plant cells. Participates in transition from the biotrophic to the necrotrophic phase of Magnaporthe oryzae. Elicits rice basic defense responses during the early stage of interaction and promotes cell death in the late stage of compatible interaction. This is Biotrophy-associated secreted protein 4 from Pyricularia oryzae (strain 70-15 / ATCC MYA-4617 / FGSC 8958) (Rice blast fungus).